The chain runs to 342 residues: N-acetyl-gamma-glutamyl-phosphate reductase (342 aa).

Cys-149 is a catalytic residue.

The protein belongs to the NAGSA dehydrogenase family. Type 1 subfamily.

Its subcellular location is the cytoplasm. It carries out the reaction N-acetyl-L-glutamate 5-semialdehyde + phosphate + NADP(+) = N-acetyl-L-glutamyl 5-phosphate + NADPH + H(+). Its pathway is amino-acid biosynthesis; L-arginine biosynthesis; N(2)-acetyl-L-ornithine from L-glutamate: step 3/4. Functionally, catalyzes the NADPH-dependent reduction of N-acetyl-5-glutamyl phosphate to yield N-acetyl-L-glutamate 5-semialdehyde. The polypeptide is N-acetyl-gamma-glutamyl-phosphate reductase (Cereibacter sphaeroides (strain ATCC 17029 / ATH 2.4.9) (Rhodobacter sphaeroides)).